We begin with the raw amino-acid sequence, 392 residues long: Erythronate-4-phosphate dehydrogenase (392 aa).

Substrate contacts are provided by serine 48 and threonine 69. Aspartate 149 is an NAD(+) binding site. Residue arginine 215 is part of the active site. Aspartate 239 contacts NAD(+). Residue glutamate 244 is part of the active site. Histidine 261 acts as the Proton donor in catalysis. Glycine 264 lines the NAD(+) pocket. Tyrosine 265 lines the substrate pocket.

This sequence belongs to the D-isomer specific 2-hydroxyacid dehydrogenase family. PdxB subfamily. In terms of assembly, homodimer.

The protein resides in the cytoplasm. The catalysed reaction is 4-phospho-D-erythronate + NAD(+) = (R)-3-hydroxy-2-oxo-4-phosphooxybutanoate + NADH + H(+). Its pathway is cofactor biosynthesis; pyridoxine 5'-phosphate biosynthesis; pyridoxine 5'-phosphate from D-erythrose 4-phosphate: step 2/5. In terms of biological role, catalyzes the oxidation of erythronate-4-phosphate to 3-hydroxy-2-oxo-4-phosphonooxybutanoate. This chain is Erythronate-4-phosphate dehydrogenase, found in Salinibacter ruber (strain DSM 13855 / M31).